The sequence spans 382 residues: RIB43A-like with coiled-coils protein 2 (382 aa).

The stretch at 222–255 forms a coiled coil; sequence NKSQAIESVERKKQEKKQEQEDNLAEITNLLRGD.

It belongs to the RIB43A family. Microtubule inner protein component of sperm flagellar doublet microtubules. In terms of tissue distribution, expressed in airway epithelial cells.

Its subcellular location is the cytoplasm. The protein resides in the cytoskeleton. It localises to the cilium axoneme. The protein localises to the flagellum axoneme. In terms of biological role, microtubule inner protein (MIP) part of the dynein-decorated doublet microtubules (DMTs) in cilia axoneme, which is required for motile cilia beating. This chain is RIB43A-like with coiled-coils protein 2, found in Homo sapiens (Human).